A 420-amino-acid chain; its full sequence is Phospholipase A1-II 3 (420 aa).

The signal sequence occupies residues 1–21 (MCCFLLVSVLLATTLTDVASA). An N-linked (GlcNAc...) asparagine glycan is attached at N231. The Acyl-ester intermediate role is filled by S240. S240 (charge relay system) is an active-site residue. N-linked (GlcNAc...) asparagine glycosylation occurs at N294. Catalysis depends on charge relay system residues D305 and H343. Positions 367–388 (VVDRDLALVNKEVDALRDEYQV) form a coiled coil. N403 carries an N-linked (GlcNAc...) asparagine glycan.

This sequence belongs to the AB hydrolase superfamily. Lipase family.

It is found in the secreted. Acylhydrolase that catalyzes the hydrolysis of phospholipids at the sn-1 position. The sequence is that of Phospholipase A1-II 3 from Oryza sativa subsp. indica (Rice).